The primary structure comprises 348 residues: MTKKIFATGATGYIGGDAIYALLSASPEYEVSCLVRSGAKATELVARHPSVRIVDGTLDDLELLEEAAANADIVCNFAHATHEPSVSALAKGLARRQRPGHGYLIHTMGSGTMIYDDVIQRRFGEHSDKVFNDVEGLPEVLAVPDFAKARGAENAVRDVGVKNPDRVRTAVVCTGSAYGPGRGLVEYRTSAIHELVRCTLSRGHALQVGAGKSAWRNVYIRDLSDVFVKLITHATNDEQDSDNTDESVWGGSGGYYFVENGEHVWGELARAISDEAVAQGLIQGGDIESIDAAEAASLAPMCNFFWGCNARVEGRRAARGLNWKPVGPPLVKELEVIVQKEAEKLGLS.

This sequence belongs to the avfA family.

It functions in the pathway mycotoxin biosynthesis. In terms of biological role, oxidase; part of the gene cluster that mediates the biosynthesis of UCS1025A, a member of the pyrrolizidinone family that acts as a strong telomerase inhibitor and displays potent antibacterial and antitumor properties. These compounds share a hemiaminal-containing pyrrolizidinone core fused with a gamma-lactone, giving a furopyrrolizidine that is connected to a decalin fragment. The polyketide synthase module (PKS) of the PKS-NRPS ucsA is responsible for the synthesis of the polyketide backbone via the condensation of an acetyl-CoA starter unit with 6 malonyl-CoA units. The downstream nonribosomal peptide synthetase (NRPS) module then amidates the carboxyl end of the polyketide with a 2S,3S-methylproline derived from L-isoleucine by the 2-oxoglutarate-dependent dioxygenase ucsF which converts L-isoleucine to (4S,5S)-4-methylpyrroline-5-carboxylate that is further converted to 2S,3S-methylproline by the pyrroline-5-carboxylate reductase ucsG. Reductive release of the completed aminoacyl polyketide from the assembly line can form the 3-pyrrolin-2-one structure via an intramolecular Knoevenagel reaction. Because ucsA lacks a designated enoylreductase (ER) domain, the required activity is provided the enoyl reductase ucsL. This keto acyclic precursor is the substrate of the Diels-Alderase ucsH, that catalyzes the Diels-Alder cycloaddition. Oxidation of the 3S-methyl group to a carboxylate by the cytochrome P450 monooxygenase ucsK allows an oxa-Michael cyclization that might involve the reductase/dehydrogenase ucsI and which furnishes the furopyrrolizidine. The oxidase ucsJ likely plays a critical role in stereoselective reduction of the C5-C6 double bond to afford the required R-configured carboxylate group. Further enolization and oxidation at C5 by an unidentified enzyme affords the last intermediate that can undergo oxa-Michael cyclization to yield UCS1025A. This is Oxidase ucsJ from Acremonium sp.